Reading from the N-terminus, the 521-residue chain is Probable xyloglucan galactosyltransferase GT14 (521 aa).

Residues 1 to 30 lie on the Cytoplasmic side of the membrane; sequence MRPKNYSQMEKPISITTGKFRTNNNNNHNN. A helical; Signal-anchor for type II membrane protein membrane pass occupies residues 31 to 51; sequence VWFVVPLFFILCFVLLCFDYS. Topologically, residues 52-521 are lumenal; the sequence is ALFTDTDETA…SPYEEPQVLA (470 aa). Residues 72–92 form a disordered region; the sequence is TSSEFTKDDNFSRFPDDPSPD. Residues 76 to 87 show a composition bias toward basic and acidic residues; the sequence is FTKDDNFSRFPD. 6 N-linked (GlcNAc...) asparagine glycosylation sites follow: asparagine 81, asparagine 177, asparagine 203, asparagine 249, asparagine 265, and asparagine 411. Residues 492–521 form a disordered region; sequence RQGKDGSDGFDDRDDYKYTFSPYEEPQVLA.

It belongs to the glycosyltransferase 47 family. In terms of tissue distribution, expressed in roots, hypocotyls, cotyledons, leaves, stems, stamens and carpels.

It localises to the golgi apparatus membrane. Functionally, functions in xyloglucan synthesis by adding side chains to the xylosylated glucan backbone. Involved in the galactosylation of hemicellulose xyloglucan. This Arabidopsis thaliana (Mouse-ear cress) protein is Probable xyloglucan galactosyltransferase GT14.